The chain runs to 480 residues: 3-isopropylmalate dehydratase large subunit (480 aa).

3 residues coordinate [4Fe-4S] cluster: C360, C418, and C421.

This sequence belongs to the aconitase/IPM isomerase family. LeuC type 1 subfamily. As to quaternary structure, heterodimer of LeuC and LeuD. Requires [4Fe-4S] cluster as cofactor.

It catalyses the reaction (2R,3S)-3-isopropylmalate = (2S)-2-isopropylmalate. The protein operates within amino-acid biosynthesis; L-leucine biosynthesis; L-leucine from 3-methyl-2-oxobutanoate: step 2/4. In terms of biological role, catalyzes the isomerization between 2-isopropylmalate and 3-isopropylmalate, via the formation of 2-isopropylmaleate. The polypeptide is 3-isopropylmalate dehydratase large subunit (Anaeromyxobacter dehalogenans (strain 2CP-1 / ATCC BAA-258)).